Here is a 300-residue protein sequence, read N- to C-terminus: Porphobilinogen deaminase (300 aa).

Position 242 is an S-(dipyrrolylmethanemethyl)cysteine (Cys-242).

This sequence belongs to the HMBS family. In terms of assembly, monomer. Dipyrromethane is required as a cofactor.

It catalyses the reaction 4 porphobilinogen + H2O = hydroxymethylbilane + 4 NH4(+). The protein operates within porphyrin-containing compound metabolism; protoporphyrin-IX biosynthesis; coproporphyrinogen-III from 5-aminolevulinate: step 2/4. Functionally, tetrapolymerization of the monopyrrole PBG into the hydroxymethylbilane pre-uroporphyrinogen in several discrete steps. This Rickettsia bellii (strain OSU 85-389) protein is Porphobilinogen deaminase.